Reading from the N-terminus, the 398-residue chain is Phosphoglycerate kinase (398 aa).

Residues 24-26 (DFN), arginine 39, 62-65 (HFGR), arginine 121, and arginine 154 contribute to the substrate site. Residues lysine 205, glycine 296, glutamate 327, and 354–357 (GGDS) contribute to the ATP site.

This sequence belongs to the phosphoglycerate kinase family. Monomer.

Its subcellular location is the cytoplasm. It carries out the reaction (2R)-3-phosphoglycerate + ATP = (2R)-3-phospho-glyceroyl phosphate + ADP. The protein operates within carbohydrate degradation; glycolysis; pyruvate from D-glyceraldehyde 3-phosphate: step 2/5. The polypeptide is Phosphoglycerate kinase (Trichodesmium erythraeum (strain IMS101)).